Reading from the N-terminus, the 176-residue chain is Nuclear transcription factor Y subunit B-10 (176 aa).

The segment covering methionine 1–glutamate 15 has biased composition (gly residues). Positions methionine 1–glutamate 29 are disordered. Alanine 2 bears the N-acetylalanine mark. Residues leucine 34–serine 40 mediate DNA binding. The tract at residues methionine 61–valine 72 is subunit association domain (SAD). Residues glycine 121–glutamate 176 are disordered. A compositionally biased stretch (low complexity) spans glutamine 139–proline 159. Over residues tyrosine 160 to methionine 169 the composition is skewed to polar residues.

The protein belongs to the NFYB/HAP3 subunit family. In terms of assembly, heterotrimeric transcription factor composed of three components, NF-YA, NF-YB and NF-YC. NF-YB and NF-YC must interact and dimerize for NF-YA association and DNA binding. In terms of tissue distribution, expressed in the whole plant, except roots.

It is found in the nucleus. Its function is as follows. Component of the NF-Y/HAP transcription factor complex. The NF-Y complex stimulates the transcription of various genes by recognizing and binding to a CCAAT motif in promoters. The sequence is that of Nuclear transcription factor Y subunit B-10 (NFYB10) from Arabidopsis thaliana (Mouse-ear cress).